We begin with the raw amino-acid sequence, 317 residues long: Melanocyte-stimulating hormone receptor (317 aa).

Residues 1-37 are Extracellular-facing; the sequence is MPVQGSQRRLLGSLNSTPTATPHLGLAANQTGARCLE. An N-linked (GlcNAc...) asparagine glycan is attached at Asn-29. Residues 38-63 form a helical membrane-spanning segment; that stretch reads MSIPDGLFLSLGLVSLVENVLVVTAI. At 64–72 the chain is on the cytoplasmic side; it reads AKNRNLHSP. A helical transmembrane segment spans residues 73-93; that stretch reads MYCFICCLALSDLLVSGSNML. The Extracellular segment spans residues 94–118; that stretch reads ETAVTLLLEAGALAARAAVVQQLDN. Residues 119–140 form a helical membrane-spanning segment; sequence VIDVITCSSMLSSLCFLGAIAV. The Cytoplasmic segment spans residues 141 to 163; it reads DRYISIFYALRYHSIVTLPRARR. Residues 164–183 traverse the membrane as a helical segment; sequence AIAAIWVASVLCSTLFIAYY. The Extracellular segment spans residues 184–191; that stretch reads DHAAVLLC. A helical membrane pass occupies residues 192 to 211; the sequence is LVVFFLAMLVLMAVLYVHML. The Cytoplasmic portion of the chain corresponds to 212-240; that stretch reads ARACQHAQGIARLHKRQRLAHQGFGLKGA. The helical transmembrane segment at 241-266 threads the bilayer; sequence ATLTILLGIFFLCWGPFFLHLTLIVL. The Extracellular segment spans residues 267–279; the sequence is CPQHPTCSCIFKN. The chain crosses the membrane as a helical span at residues 280-300; sequence FNLFLTLIICNAIIDPLIYAF. The Cytoplasmic segment spans residues 301-317; sequence RSQELRRTLKEVLLCSW. The S-palmitoyl cysteine moiety is linked to residue Cys-315.

The protein belongs to the G-protein coupled receptor 1 family. In terms of assembly, interacts with MGRN1, but does not undergo MGRN1-mediated ubiquitination; this interaction competes with GNAS-binding and thus inhibits agonist-induced cAMP production. Interacts with OPN3; the interaction results in a decrease in MC1R-mediated cAMP signaling and ultimately a decrease in melanin production in melanocytes.

The protein localises to the cell membrane. Its function is as follows. Receptor for MSH (alpha, beta and gamma) and ACTH. The activity of this receptor is mediated by G proteins which activate adenylate cyclase. Mediates melanogenesis, the production of eumelanin (black/brown) and phaeomelanin (red/yellow), via regulation of cAMP signaling in melanocytes. The sequence is that of Melanocyte-stimulating hormone receptor (MC1R) from Macaca nemestrina (Pig-tailed macaque).